Here is a 399-residue protein sequence, read N- to C-terminus: Elongation factor Tu (399 aa).

Positions 10–209 (KPHVNIGTIG…AVDDYIPTPV (200 aa)) constitute a tr-type G domain. A G1 region spans residues 19 to 26 (GHVDHGKT). 19-26 (GHVDHGKT) serves as a coordination point for GTP. Position 26 (threonine 26) interacts with Mg(2+). A G2 region spans residues 62–66 (GITIN). The segment at 83-86 (DCPG) is G3. Residues 83–87 (DCPGH) and 138–141 (NKCD) each bind GTP. Positions 138–141 (NKCD) are G4. Residues 175 to 177 (SAY) form a G5 region.

It belongs to the TRAFAC class translation factor GTPase superfamily. Classic translation factor GTPase family. EF-Tu/EF-1A subfamily. In terms of assembly, monomer.

Its subcellular location is the cytoplasm. The enzyme catalyses GTP + H2O = GDP + phosphate + H(+). In terms of biological role, GTP hydrolase that promotes the GTP-dependent binding of aminoacyl-tRNA to the A-site of ribosomes during protein biosynthesis. This chain is Elongation factor Tu, found in Bifidobacterium longum (strain DJO10A).